Reading from the N-terminus, the 152-residue chain is MAHQERTFIAIKPDGVQRGLVGDIVKRFEQKGFRLVAMKFLRASEDLLKEHYIDLKDRPFYPGLVKYMHSGPVVAMVWEGLNVVKTGRMMLGETNPADSKPGTIRGDFCIQVGRNIIHGSDSVKSAEKEISLWFKPEELVDYKSCAFDWIYE.

Residues 1–66 (MAHQERTFIA…DRPFYPGLVK (66 aa)) form an interaction with AKAP13 region. Residues K12, F60, R88, T94, R105, and N115 each coordinate ATP. The Pros-phosphohistidine intermediate role is filled by H118.

It belongs to the NDK family. Hexamer of two different chains: An and B (A6, A5B, A4B2, A3B3, A2B4, AB5, B6). Interacts with CAPN8. Interacts with AKAP13. Interacts with ITGB1BP1 (via C-terminal domain region). Interacts with BCL2L10. The cofactor is Mg(2+). Ubiquitous.

It localises to the cytoplasm. It is found in the cell projection. The protein localises to the lamellipodium. Its subcellular location is the ruffle. The protein resides in the nucleus. The catalysed reaction is a 2'-deoxyribonucleoside 5'-diphosphate + ATP = a 2'-deoxyribonucleoside 5'-triphosphate + ADP. It catalyses the reaction a ribonucleoside 5'-diphosphate + ATP = a ribonucleoside 5'-triphosphate + ADP. The enzyme catalyses ATP + protein L-histidine = ADP + protein N-phospho-L-histidine.. Functionally, major role in the synthesis of nucleoside triphosphates other than ATP. The ATP gamma phosphate is transferred to the NDP beta phosphate via a ping-pong mechanism, using a phosphorylated active-site intermediate. Negatively regulates Rho activity by interacting with AKAP13/LBC. Acts as a transcriptional activator of the MYC gene; binds DNA non-specifically. Binds to both single-stranded guanine- and cytosine-rich strands within the nuclease hypersensitive element (NHE) III(1) region of the MYC gene promoter. Does not bind to duplex NHE III(1). Has G-quadruplex (G4) DNA-binding activity, which is independent of its nucleotide-binding and kinase activity. Binds both folded and unfolded G4 with similar low nanomolar affinities. Stabilizes folded G4s regardless of whether they are prefolded or not. Exhibits histidine protein kinase activity. In Canis lupus familiaris (Dog), this protein is Nucleoside diphosphate kinase B (NME2).